The primary structure comprises 225 residues: Small ribosomal subunit protein uS5 (225 aa).

The region spanning 57–120 (LEEQVLDVKL…AHAKLSLIKV (64 aa)) is the S5 DRBM domain.

Belongs to the universal ribosomal protein uS5 family. As to quaternary structure, part of the 30S ribosomal subunit. Contacts protein S4.

Functionally, with S4 and S12 plays an important role in translational accuracy. The polypeptide is Small ribosomal subunit protein uS5 (Methanococcus maripaludis (strain DSM 14266 / JCM 13030 / NBRC 101832 / S2 / LL)).